Consider the following 121-residue polypeptide: Ribonuclease P protein component (121 aa).

It belongs to the RnpA family. Consists of a catalytic RNA component (M1 or rnpB) and a protein subunit.

The enzyme catalyses Endonucleolytic cleavage of RNA, removing 5'-extranucleotides from tRNA precursor.. In terms of biological role, RNaseP catalyzes the removal of the 5'-leader sequence from pre-tRNA to produce the mature 5'-terminus. It can also cleave other RNA substrates such as 4.5S RNA. The protein component plays an auxiliary but essential role in vivo by binding to the 5'-leader sequence and broadening the substrate specificity of the ribozyme. This Neisseria meningitidis serogroup B (strain ATCC BAA-335 / MC58) protein is Ribonuclease P protein component.